Here is a 93-residue protein sequence, read N- to C-terminus: uncharacterized protein (93 aa).

The segment at 41–62 (RSANRIPTTSSTSTSGTIPTTT) is disordered. The segment covering 46–62 (IPTTSSTSTSGTIPTTT) has biased composition (low complexity).

This is an uncharacterized protein from Dictyostelium discoideum (Social amoeba).